We begin with the raw amino-acid sequence, 183 residues long: Nucleosome assembly protein 1-like 5 (183 aa).

Residues 1 to 71 are disordered; sequence MADSENQGPA…APKPKNDFIE (71 aa). Low complexity-rich tracts occupy residues 7–21 and 28–49; these read QGPA…AAEA and AEGG…SAAG. Residues 81–107 are a coiled coil; sequence VLALKKLQKRCDKIEAKFDKEFQALEK. The span at 135–161 shows a compositional bias: acidic residues; that stretch reads EGEEEEEEEYEDDEEEGEEEEEEEEAA. The segment at 135–183 is disordered; sequence EGEEEEEEEYEDDEEEGEEEEEEEEAAAEAAAGAKHDDAHAEMPDDAKK. Over residues 168-183 the composition is skewed to basic and acidic residues; that stretch reads AKHDDAHAEMPDDAKK.

It belongs to the nucleosome assembly protein (NAP) family.

The protein resides in the nucleus. This chain is Nucleosome assembly protein 1-like 5 (NAP1L5), found in Pongo abelii (Sumatran orangutan).